Reading from the N-terminus, the 187-residue chain is Elongation factor P (187 aa).

Belongs to the elongation factor P family.

Its subcellular location is the cytoplasm. It participates in protein biosynthesis; polypeptide chain elongation. Its function is as follows. Involved in peptide bond synthesis. Stimulates efficient translation and peptide-bond synthesis on native or reconstituted 70S ribosomes in vitro. Probably functions indirectly by altering the affinity of the ribosome for aminoacyl-tRNA, thus increasing their reactivity as acceptors for peptidyl transferase. The protein is Elongation factor P (efp) of Mycobacterium bovis (strain ATCC BAA-935 / AF2122/97).